The following is a 263-amino-acid chain: Indole-3-glycerol phosphate synthase (263 aa).

This sequence belongs to the TrpC family.

The enzyme catalyses 1-(2-carboxyphenylamino)-1-deoxy-D-ribulose 5-phosphate + H(+) = (1S,2R)-1-C-(indol-3-yl)glycerol 3-phosphate + CO2 + H2O. Its pathway is amino-acid biosynthesis; L-tryptophan biosynthesis; L-tryptophan from chorismate: step 4/5. This is Indole-3-glycerol phosphate synthase from Rhodospirillum rubrum (strain ATCC 11170 / ATH 1.1.1 / DSM 467 / LMG 4362 / NCIMB 8255 / S1).